The following is a 62-amino-acid chain: Arabinogalactan protein 40 (62 aa).

The first 22 residues, 1 to 22 (MEMKNIFVALFISAVLVSSVSA), serve as a signal peptide directing secretion. 3 positions are modified to 4-hydroxyproline: P28, P30, and P32. O-linked (Ara...) hydroxyproline glycosylation is found at P28, P30, and P32. S35 is lipidated: GPI-anchor amidated serine. Positions 36–62 (SASTVAFPVVGSIVAASLSAFLALLLQ) are cleaved as a propeptide — removed in mature form.

This sequence belongs to the AG-peptide AGP family. Contains 4-hydroxyproline; hydroxylated on Pro-28, Pro-30 and Pro-32. Post-translationally, O-glycosylated on hydroxyprolines; noncontiguous hydroxylproline residues are glycosylated with arabinogalactan.

The protein resides in the cell membrane. Functionally, proteoglycan that seems to be implicated in diverse developmental roles such as differentiation, cell-cell recognition, embryogenesis and programmed cell death. The polypeptide is Arabinogalactan protein 40 (Arabidopsis thaliana (Mouse-ear cress)).